Consider the following 408-residue polypeptide: Probable pectate lyase 18 (408 aa).

The first 24 residues, 1 to 24, serve as a signal peptide directing secretion; the sequence is MKMQTKKLFITIVSFLLYAPLFLS. N-linked (GlcNAc...) asparagine glycosylation is present at Asn42. Positions 206, 230, and 234 each coordinate Ca(2+). Arg286 is an active-site residue.

It belongs to the polysaccharide lyase 1 family. Ca(2+) is required as a cofactor. In terms of tissue distribution, expressed in flowers, but not in leaves.

It carries out the reaction Eliminative cleavage of (1-&gt;4)-alpha-D-galacturonan to give oligosaccharides with 4-deoxy-alpha-D-galact-4-enuronosyl groups at their non-reducing ends.. It participates in glycan metabolism; pectin degradation; 2-dehydro-3-deoxy-D-gluconate from pectin: step 2/5. In Arabidopsis thaliana (Mouse-ear cress), this protein is Probable pectate lyase 18.